We begin with the raw amino-acid sequence, 447 residues long: Probable alpha-galactosidase B (447 aa).

The first 22 residues, 1-22, serve as a signal peptide directing secretion; it reads MTTFLSLTTAAAVLTLARGSNA. 2 cysteine pairs are disulfide-bonded: Cys45/Cys77 and Cys127/Cys157. The active-site Nucleophile is Asp155. N-linked (GlcNAc...) asparagine glycans are attached at residues Asn162 and Asn180. Residue 225 to 229 participates in substrate binding; it reads NWGQA. An N-linked (GlcNAc...) asparagine glycan is attached at Asn236. The active-site Proton donor is the Asp247. Asn286 is a glycosylation site (N-linked (GlcNAc...) asparagine).

This sequence belongs to the glycosyl hydrolase 27 family.

The protein localises to the secreted. The catalysed reaction is Hydrolysis of terminal, non-reducing alpha-D-galactose residues in alpha-D-galactosides, including galactose oligosaccharides, galactomannans and galactolipids.. In terms of biological role, hydrolyzes a variety of simple alpha-D-galactoside as well as more complex molecules such as oligosaccharides and polysaccharides. This chain is Probable alpha-galactosidase B (aglB), found in Neosartorya fischeri (strain ATCC 1020 / DSM 3700 / CBS 544.65 / FGSC A1164 / JCM 1740 / NRRL 181 / WB 181) (Aspergillus fischerianus).